The sequence spans 183 residues: Protein Syd (183 aa).

This sequence belongs to the Syd family.

It localises to the cell inner membrane. Its function is as follows. Interacts with the SecY protein in vivo. May bind preferentially to an uncomplexed state of SecY, thus functioning either as a chelating agent for excess SecY in the cell or as a regulatory factor that negatively controls the translocase function. The polypeptide is Protein Syd (Yersinia pestis bv. Antiqua (strain Antiqua)).